Here is a 186-residue protein sequence, read N- to C-terminus: 19 kDa globulin (186 aa).

The first 22 residues, 1-22, serve as a signal peptide directing secretion; that stretch reads MASKVVFFAAALMAAMVAISGA. Residues 108–155 are disordered; it reads PLEQGWSSSSSEYYGGEGSSSEQGYYGEGSSEEGYYGEQQQQPGMTRV. The span at 110 to 149 shows a compositional bias: low complexity; the sequence is EQGWSSSSSEYYGGEGSSSEQGYYGEGSSEEGYYGEQQQQ.

The protein belongs to the 2S seed storage albumins family.

The protein localises to the secreted. Its function is as follows. Seed storage protein. This is 19 kDa globulin from Oryza sativa subsp. japonica (Rice).